The following is a 258-amino-acid chain: Ribosomal RNA small subunit methyltransferase A (258 aa).

S-adenosyl-L-methionine-binding residues include His13, Leu15, Gly41, Asp63, Asp87, and Asn106.

The protein belongs to the class I-like SAM-binding methyltransferase superfamily. rRNA adenine N(6)-methyltransferase family. RsmA subfamily.

The protein localises to the cytoplasm. It catalyses the reaction adenosine(1518)/adenosine(1519) in 16S rRNA + 4 S-adenosyl-L-methionine = N(6)-dimethyladenosine(1518)/N(6)-dimethyladenosine(1519) in 16S rRNA + 4 S-adenosyl-L-homocysteine + 4 H(+). In terms of biological role, specifically dimethylates two adjacent adenosines (A1518 and A1519) in the loop of a conserved hairpin near the 3'-end of 16S rRNA in the 30S particle. May play a critical role in biogenesis of 30S subunits. This Cytophaga hutchinsonii (strain ATCC 33406 / DSM 1761 / CIP 103989 / NBRC 15051 / NCIMB 9469 / D465) protein is Ribosomal RNA small subunit methyltransferase A.